A 232-amino-acid polypeptide reads, in one-letter code: Protein UL24 homolog (232 aa).

The interval 191 to 232 (PQKELFGIHKPENSEVETVGATKSTRKGAEKSRLSRRSRKSN) is disordered.

Belongs to the herpesviridae UL24 family.

It localises to the virion. Its subcellular location is the host cytoplasm. The protein resides in the host nucleus. It is found in the host nucleolus. The protein localises to the host Golgi apparatus. May participate in nuclear egress of viral particles. Plays a role in the dispersal of several host nucleolar proteins including NCL/nucleolin and NPM1. Since deletion of host NCL/nucleolin negatively impact on nuclear egress, UL24 supposedly acts on this process through its effect on host nucleoli. The sequence is that of Protein UL24 homolog from Elephas maximus (Indian elephant).